The following is a 511-amino-acid chain: Trigger factor (511 aa).

The PPIase FKBP-type domain maps to 168 to 253; the sequence is GDLLTIDFVG…VKEVKAPAEV (86 aa). Positions 446–511 are disordered; that stretch reads DEHEHHHHDH…KAPAKKKKED (66 aa). A compositionally biased stretch (basic and acidic residues) spans 455 to 478; the sequence is HDHDHDHDHDHDHGHDHDHGDEKP. Positions 479–488 are enriched in basic residues; sequence KKKPAAKKAA. Positions 489 to 498 are enriched in basic and acidic residues; that stretch reads AKSDDGEAKP. A compositionally biased stretch (basic residues) spans 499–511; the sequence is AAKKAPAKKKKED.

Belongs to the FKBP-type PPIase family. Tig subfamily.

The protein resides in the cytoplasm. It catalyses the reaction [protein]-peptidylproline (omega=180) = [protein]-peptidylproline (omega=0). In terms of biological role, involved in protein export. Acts as a chaperone by maintaining the newly synthesized protein in an open conformation. Functions as a peptidyl-prolyl cis-trans isomerase. In Parvibaculum lavamentivorans (strain DS-1 / DSM 13023 / NCIMB 13966), this protein is Trigger factor.